A 459-amino-acid polypeptide reads, in one-letter code: 11S globulin seed storage protein 2 (459 aa).

A signal peptide spans methionine 1–alanine 21. Intrachain disulfides connect cysteine 34–cysteine 67 and cysteine 110–cysteine 284. 2 Cupin type-1 domains span residues glutamine 37–arginine 237 and threonine 290–glutamine 439. A disordered region spans residues arginine 118 to aspartate 139. Residues arginine 121–aspartate 139 are compositionally biased toward basic and acidic residues.

Belongs to the 11S seed storage protein (globulins) family. Homohexamer. Each subunit is composed of an acidic and a basic chain derived from a single precursor and linked by a disulfide bond. As to expression, expressed in seeds (at protein level). Expressed in seeds.

Functionally, seed storage protein. The polypeptide is 11S globulin seed storage protein 2 (Sesamum indicum (Oriental sesame)).